Here is a 190-residue protein sequence, read N- to C-terminus: HTH-type transcriptional repressor AcnR (190 aa).

In terms of domain architecture, HTH tetR-type spans 10-70; it reads SMRRQEILEG…ALAREDAARM (61 aa). The segment at residues 33–52 is a DNA-binding region (H-T-H motif); that stretch reads TVRRLEETVGKSRGAIFHHF. Citrate contacts are provided by residues 79-80, Arg130, and Asn134; that span reads LV. Residue Glu181 participates in Mg(2+) binding. Arg185 lines the citrate pocket.

In terms of assembly, homodimer.

Its function is as follows. AcnR negatively controls the expression of the aconitase gene acn. The chain is HTH-type transcriptional repressor AcnR from Corynebacterium diphtheriae (strain ATCC 700971 / NCTC 13129 / Biotype gravis).